Here is a 216-residue protein sequence, read N- to C-terminus: GTP-binding nuclear protein spi1 (216 aa).

Residues Asn6–Asn170 enclose the Small GTPase Ran-type domain. Position 17 to 24 (Asp17 to Thr24) interacts with GTP. Thr20 is subject to Phosphothreonine. Positions Lys36–Val44 are switch-I. GTP is bound by residues Gly67, Asn121 to Asp124, and Ser149 to Lys151. Residues Gly67–Gln83 form a switch-II region.

Belongs to the small GTPase superfamily. Ran family. Oligomer of dis3, pim1 and spi1. Found in a nuclear export complex with RanGTP, exportin and pre-miRNA. Interacts with fft3.

It localises to the nucleus. GTP-binding protein involved in nucleocytoplasmic transport. Required for the import of protein into the nucleus and also for RNA export. The sequence is that of GTP-binding nuclear protein spi1 (spi1) from Schizosaccharomyces pombe (strain 972 / ATCC 24843) (Fission yeast).